Here is a 398-residue protein sequence, read N- to C-terminus: Glycosyltransferase GlyF (398 aa).

Residues 1–259 are GT8 domain; that stretch reads MRKSIVLAAD…SEIAFQRSDL (259 aa). UDP is bound by residues 8-13 and 101-102; these read AADNAY and DS. Residues D101, D103, and H221 each contribute to the Mn(2+) site. 221–227 serves as a coordination point for UDP; the sequence is HYASHDK.

The protein in the N-terminal section; belongs to the glycosyltransferase 8 family.

In terms of biological role, may be involved in the polymorphic O-glycosylation of the serine-rich repeat protein PsrP. Has hydrolytic activity against UDP-galactose and to a lesser extent against UDP-glucose; no glycosyltransferase activity has been seen with tested substrates. This chain is Glycosyltransferase GlyF, found in Streptococcus pneumoniae serotype 4 (strain ATCC BAA-334 / TIGR4).